Reading from the N-terminus, the 96-residue chain is Dynein light chain roadblock-type 2 (96 aa).

Position 2 is an N-acetylalanine (Ala-2).

This sequence belongs to the GAMAD family. As to quaternary structure, homodimer. The cytoplasmic dynein 1 complex consists of two catalytic heavy chains (HCs) and a number of non-catalytic subunits presented by intermediate chains (ICs), light intermediate chains (LICs) and light chains (LCs); the composition seems to vary in respect to the IC, LIC and LC composition. The heavy chain homodimer serves as a scaffold for the probable homodimeric assembly of the respective non-catalytic subunits. The ICs and LICs bind directly to the HC dimer and the LCs assemble on the IC dimer. Interacts with DYNC1I1 and DYNC1I2. Self-associates. Interacts with DYNLRB1.

The protein localises to the cytoplasm. It localises to the cytoskeleton. Acts as one of several non-catalytic accessory components of the cytoplasmic dynein 1 complex that are thought to be involved in linking dynein to cargos and to adapter proteins that regulate dynein function. Cytoplasmic dynein 1 acts as a motor for the intracellular retrograde motility of vesicles and organelles along microtubules. The protein is Dynein light chain roadblock-type 2 (DYNLRB2) of Bos taurus (Bovine).